A 327-amino-acid chain; its full sequence is Probable cell division protein WhiA (327 aa).

The H-T-H motif DNA-binding region spans 275-308 (SLEELGRLADPVMTKDAVAGRIRRLLSMADRKAK). The tract at residues 307 to 327 (AKTEGIPDTESAVTPELLEEA) is disordered.

It belongs to the WhiA family.

In terms of biological role, involved in cell division and chromosome segregation. The sequence is that of Probable cell division protein WhiA from Mycobacteroides abscessus (strain ATCC 19977 / DSM 44196 / CCUG 20993 / CIP 104536 / JCM 13569 / NCTC 13031 / TMC 1543 / L948) (Mycobacterium abscessus).